We begin with the raw amino-acid sequence, 236 residues long: Large ribosomal subunit protein uL1 (236 aa).

It belongs to the universal ribosomal protein uL1 family. As to quaternary structure, part of the 50S ribosomal subunit.

Functionally, binds directly to 23S rRNA. The L1 stalk is quite mobile in the ribosome, and is involved in E site tRNA release. In terms of biological role, protein L1 is also a translational repressor protein, it controls the translation of the L11 operon by binding to its mRNA. The protein is Large ribosomal subunit protein uL1 of Corynebacterium glutamicum (strain R).